The chain runs to 183 residues: Ferritin heavy chain (183 aa).

Position 1 is an N-acetylmethionine (M1). T2 is subject to N-acetylthreonine; in Ferritin heavy chain, N-terminally processed. One can recognise a Ferritin-like diiron domain in the interval 11 to 160 (QNYHQDSEAA…DHVTNLRKMG (150 aa)). E28, E63, H66, E108, and Q142 together coordinate Fe cation. Phosphoserine occurs at positions 179 and 183.

The protein belongs to the ferritin family. As to quaternary structure, oligomer of 24 subunits. There are two types of subunits: L (light) chain and H (heavy) chain. The major chain can be light or heavy, depending on the species and tissue type. The functional molecule forms a roughly spherical shell with a diameter of 12 nm and contains a central cavity into which the insoluble mineral iron core is deposited. Interacts with NCOA4; NCOA4 promotes targeting of the iron-binding ferritin complex to autolysosomes following starvation or iron depletion.

The protein resides in the cytoplasm. It is found in the lysosome. It localises to the cytoplasmic vesicle. Its subcellular location is the autophagosome. The enzyme catalyses 4 Fe(2+) + O2 + 4 H(+) = 4 Fe(3+) + 2 H2O. Its function is as follows. Stores iron in a soluble, non-toxic, readily available form. Important for iron homeostasis. Has ferroxidase activity. Iron is taken up in the ferrous form and deposited as ferric hydroxides after oxidation. Also plays a role in delivery of iron to cells. Mediates iron uptake in capsule cells of the developing kidney. Delivery to lysosomes is mediated by the cargo receptor NCOA4 for autophagic degradation and release of iron. This Pongo abelii (Sumatran orangutan) protein is Ferritin heavy chain (FTH1).